The chain runs to 425 residues: Tryptophan synthase beta chain (425 aa).

At K107 the chain carries N6-(pyridoxal phosphate)lysine.

It belongs to the TrpB family. Tetramer of two alpha and two beta chains. Requires pyridoxal 5'-phosphate as cofactor.

It carries out the reaction (1S,2R)-1-C-(indol-3-yl)glycerol 3-phosphate + L-serine = D-glyceraldehyde 3-phosphate + L-tryptophan + H2O. It participates in amino-acid biosynthesis; L-tryptophan biosynthesis; L-tryptophan from chorismate: step 5/5. Functionally, the beta subunit is responsible for the synthesis of L-tryptophan from indole and L-serine. The protein is Tryptophan synthase beta chain of Synechococcus sp. (strain JA-2-3B'a(2-13)) (Cyanobacteria bacterium Yellowstone B-Prime).